A 373-amino-acid chain; its full sequence is 4-hydroxy-3-methylbut-2-en-1-yl diphosphate synthase (flavodoxin) (373 aa).

Residues Cys-270, Cys-273, Cys-305, and Glu-312 each coordinate [4Fe-4S] cluster.

This sequence belongs to the IspG family. Requires [4Fe-4S] cluster as cofactor.

The enzyme catalyses (2E)-4-hydroxy-3-methylbut-2-enyl diphosphate + oxidized [flavodoxin] + H2O + 2 H(+) = 2-C-methyl-D-erythritol 2,4-cyclic diphosphate + reduced [flavodoxin]. The protein operates within isoprenoid biosynthesis; isopentenyl diphosphate biosynthesis via DXP pathway; isopentenyl diphosphate from 1-deoxy-D-xylulose 5-phosphate: step 5/6. Converts 2C-methyl-D-erythritol 2,4-cyclodiphosphate (ME-2,4cPP) into 1-hydroxy-2-methyl-2-(E)-butenyl 4-diphosphate. In Klebsiella pneumoniae (strain 342), this protein is 4-hydroxy-3-methylbut-2-en-1-yl diphosphate synthase (flavodoxin).